A 211-amino-acid polypeptide reads, in one-letter code: Thiamine-phosphate synthase (211 aa).

4-amino-2-methyl-5-(diphosphooxymethyl)pyrimidine is bound by residues 37–41 (QLRIK) and Asn69. Mg(2+) is bound by residues Asp70 and Asp89. Ser108 contacts 4-amino-2-methyl-5-(diphosphooxymethyl)pyrimidine. 134 to 136 (TQT) serves as a coordination point for 2-[(2R,5Z)-2-carboxy-4-methylthiazol-5(2H)-ylidene]ethyl phosphate. Lys137 is a binding site for 4-amino-2-methyl-5-(diphosphooxymethyl)pyrimidine. 2-[(2R,5Z)-2-carboxy-4-methylthiazol-5(2H)-ylidene]ethyl phosphate-binding positions include Gly166 and 186–187 (VS).

The protein belongs to the thiamine-phosphate synthase family. It depends on Mg(2+) as a cofactor.

The enzyme catalyses 2-[(2R,5Z)-2-carboxy-4-methylthiazol-5(2H)-ylidene]ethyl phosphate + 4-amino-2-methyl-5-(diphosphooxymethyl)pyrimidine + 2 H(+) = thiamine phosphate + CO2 + diphosphate. It carries out the reaction 2-(2-carboxy-4-methylthiazol-5-yl)ethyl phosphate + 4-amino-2-methyl-5-(diphosphooxymethyl)pyrimidine + 2 H(+) = thiamine phosphate + CO2 + diphosphate. The catalysed reaction is 4-methyl-5-(2-phosphooxyethyl)-thiazole + 4-amino-2-methyl-5-(diphosphooxymethyl)pyrimidine + H(+) = thiamine phosphate + diphosphate. It participates in cofactor biosynthesis; thiamine diphosphate biosynthesis; thiamine phosphate from 4-amino-2-methyl-5-diphosphomethylpyrimidine and 4-methyl-5-(2-phosphoethyl)-thiazole: step 1/1. Functionally, condenses 4-methyl-5-(beta-hydroxyethyl)thiazole monophosphate (THZ-P) and 2-methyl-4-amino-5-hydroxymethyl pyrimidine pyrophosphate (HMP-PP) to form thiamine monophosphate (TMP). In Salmonella paratyphi A (strain ATCC 9150 / SARB42), this protein is Thiamine-phosphate synthase.